Consider the following 486-residue polypeptide: MSYNNKSIKELHELLVNKEISALELTKATLSDIQAREPQIDAFLKVTEEKALKEAAAIDARGINPDVVTDGISIGVKDNIVTEGIETTAASKILGGWIPPYNATVANKLSQSGLITIGKLNMDEFAMGGSGENSSIKPTKNVWDQTKVPGGSSSGSAASVASGEVRLSLGSDTGGSIRQPAAFNGIVGLKPTYGRVSRFGLIAFASSLDQIGPLTPTVEENAQLLNVISGFDKNDSTSSNVSVPDFTSKIGQDIKGMKIALPKEYFGEGIDEKVKEQILAAAKHLEKLGAIVEEVSLPHSKYGVAVYYIIASSEASSNLQRFDGIRYGYRAQDIKNLEDLYVKSRSEGFGPEVQRRIMLGTFSLSAGSYDKHFKKAGQVRTLIINDFAKVFEKYDLILGPTTPTAAWDLGARVDDPISMYLADLLTIPVNLAGLPGISIPAGFADGLPVGMQLIGKRYDEETIYQVAAAFEATTDFHKKQPIIFGK.

Active-site charge relay system residues include Lys77 and Ser152. Ser176 serves as the catalytic Acyl-ester intermediate.

Belongs to the amidase family. GatA subfamily. Heterotrimer of A, B and C subunits.

It carries out the reaction L-glutamyl-tRNA(Gln) + L-glutamine + ATP + H2O = L-glutaminyl-tRNA(Gln) + L-glutamate + ADP + phosphate + H(+). Functionally, allows the formation of correctly charged Gln-tRNA(Gln) through the transamidation of misacylated Glu-tRNA(Gln) in organisms which lack glutaminyl-tRNA synthetase. The reaction takes place in the presence of glutamine and ATP through an activated gamma-phospho-Glu-tRNA(Gln). This Lactococcus lactis subsp. cremoris (strain SK11) protein is Glutamyl-tRNA(Gln) amidotransferase subunit A.